A 200-amino-acid chain; its full sequence is Protein GrpE (200 aa).

It belongs to the GrpE family. In terms of assembly, homodimer.

It localises to the cytoplasm. Its function is as follows. Participates actively in the response to hyperosmotic and heat shock by preventing the aggregation of stress-denatured proteins, in association with DnaK and GrpE. It is the nucleotide exchange factor for DnaK and may function as a thermosensor. Unfolded proteins bind initially to DnaJ; upon interaction with the DnaJ-bound protein, DnaK hydrolyzes its bound ATP, resulting in the formation of a stable complex. GrpE releases ADP from DnaK; ATP binding to DnaK triggers the release of the substrate protein, thus completing the reaction cycle. Several rounds of ATP-dependent interactions between DnaJ, DnaK and GrpE are required for fully efficient folding. The protein is Protein GrpE of Mycoplasma mycoides subsp. mycoides SC (strain CCUG 32753 / NCTC 10114 / PG1).